A 361-amino-acid chain; its full sequence is Phospho-N-acetylmuramoyl-pentapeptide-transferase (361 aa).

10 helical membrane-spanning segments follow: residues 27–47 (GALFTAGLFVFWFGPWIISLL), 72–92 (TPTMGGLMILAGLLVAVFLWA), 99–119 (VWITVVVTLGFGAIGFYDDYL), 139–159 (ALIAVAACVAVAEYSAPGLAY), 169–189 (AIVNLGLFWIFFASFVIVGAG), 200–220 (GLAIVPVMIAAATFGIIAYLV), 240–260 (LAVVCGALIGAGLGFLWFNAP), 264–284 (IFMGDTGSLALGGLLGTVAVA), 289–309 (IVLAVVGGLFVLEIASVIIQV), and 338–358 (QVVIRFWIIAVVLALLGLATL).

Belongs to the glycosyltransferase 4 family. MraY subfamily. Requires Mg(2+) as cofactor.

The protein resides in the cell inner membrane. The catalysed reaction is UDP-N-acetyl-alpha-D-muramoyl-L-alanyl-gamma-D-glutamyl-meso-2,6-diaminopimeloyl-D-alanyl-D-alanine + di-trans,octa-cis-undecaprenyl phosphate = di-trans,octa-cis-undecaprenyl diphospho-N-acetyl-alpha-D-muramoyl-L-alanyl-D-glutamyl-meso-2,6-diaminopimeloyl-D-alanyl-D-alanine + UMP. It participates in cell wall biogenesis; peptidoglycan biosynthesis. Functionally, catalyzes the initial step of the lipid cycle reactions in the biosynthesis of the cell wall peptidoglycan: transfers peptidoglycan precursor phospho-MurNAc-pentapeptide from UDP-MurNAc-pentapeptide onto the lipid carrier undecaprenyl phosphate, yielding undecaprenyl-pyrophosphoryl-MurNAc-pentapeptide, known as lipid I. The protein is Phospho-N-acetylmuramoyl-pentapeptide-transferase of Methylobacterium sp. (strain 4-46).